The chain runs to 107 residues: Proteinase inhibitor I-A (107 aa).

Positions 1 to 22 (MVKFAHVVAFLLLASLIQPLTA) are cleaved as a signal peptide. Positions 23–36 (RDLEINVLQLDVSQ) are excised as a propeptide.

The protein belongs to the protease inhibitor I13 (potato type I serine protease inhibitor) family.

It localises to the secreted. The polypeptide is Proteinase inhibitor I-A (TIMPB) (Nicotiana tabacum (Common tobacco)).